An 81-amino-acid polypeptide reads, in one-letter code: Photosystem I iron-sulfur center (81 aa).

4Fe-4S ferredoxin-type domains follow at residues Ala2–Trp31 and Ile39–Tyr68. [4Fe-4S] cluster is bound by residues Cys11, Cys14, Cys17, Cys21, Cys48, Cys51, Cys54, and Cys58.

As to quaternary structure, the eukaryotic PSI reaction center is composed of at least 11 subunits. Requires [4Fe-4S] cluster as cofactor.

The protein resides in the plastid. The protein localises to the chloroplast thylakoid membrane. The enzyme catalyses reduced [plastocyanin] + hnu + oxidized [2Fe-2S]-[ferredoxin] = oxidized [plastocyanin] + reduced [2Fe-2S]-[ferredoxin]. Functionally, apoprotein for the two 4Fe-4S centers FA and FB of photosystem I (PSI); essential for photochemical activity. FB is the terminal electron acceptor of PSI, donating electrons to ferredoxin. The C-terminus interacts with PsaA/B/D and helps assemble the protein into the PSI complex. Required for binding of PsaD and PsaE to PSI. PSI is a plastocyanin-ferredoxin oxidoreductase, converting photonic excitation into a charge separation, which transfers an electron from the donor P700 chlorophyll pair to the spectroscopically characterized acceptors A0, A1, FX, FA and FB in turn. This Chlorokybus atmophyticus (Soil alga) protein is Photosystem I iron-sulfur center.